The chain runs to 279 residues: Tryptophan 2,3-dioxygenase (279 aa).

Residues F48–H52, Y110, and R114 each bind substrate. Residue H237 participates in heme binding. T251 provides a ligand contact to substrate.

The protein belongs to the tryptophan 2,3-dioxygenase family. Homotetramer. Requires heme as cofactor.

It catalyses the reaction L-tryptophan + O2 = N-formyl-L-kynurenine. The protein operates within amino-acid degradation; L-tryptophan degradation via kynurenine pathway; L-kynurenine from L-tryptophan: step 1/2. Heme-dependent dioxygenase that catalyzes the oxidative cleavage of the L-tryptophan (L-Trp) pyrrole ring and converts L-tryptophan to N-formyl-L-kynurenine. Catalyzes the oxidative cleavage of the indole moiety. The protein is Tryptophan 2,3-dioxygenase of Bacillus thuringiensis (strain Al Hakam).